Here is a 303-residue protein sequence, read N- to C-terminus: Elongation factor Ts (303 aa).

The segment at 80-83 (TDFV) is involved in Mg(2+) ion dislocation from EF-Tu.

The protein belongs to the EF-Ts family.

The protein localises to the cytoplasm. Associates with the EF-Tu.GDP complex and induces the exchange of GDP to GTP. It remains bound to the aminoacyl-tRNA.EF-Tu.GTP complex up to the GTP hydrolysis stage on the ribosome. The sequence is that of Elongation factor Ts from Clostridium botulinum (strain Alaska E43 / Type E3).